A 1103-amino-acid chain; its full sequence is Isoleucine--tRNA ligase (1103 aa).

Positions 53–63 (PFANGLPHYGH) match the 'HIGH' region motif. Positions 628–632 (KLSKR) match the 'KMSKS' region motif. K631 provides a ligand contact to ATP.

The protein belongs to the class-I aminoacyl-tRNA synthetase family. IleS type 2 subfamily. In terms of assembly, monomer. It depends on Zn(2+) as a cofactor.

It localises to the cytoplasm. It catalyses the reaction tRNA(Ile) + L-isoleucine + ATP = L-isoleucyl-tRNA(Ile) + AMP + diphosphate. Functionally, catalyzes the attachment of isoleucine to tRNA(Ile). As IleRS can inadvertently accommodate and process structurally similar amino acids such as valine, to avoid such errors it has two additional distinct tRNA(Ile)-dependent editing activities. One activity is designated as 'pretransfer' editing and involves the hydrolysis of activated Val-AMP. The other activity is designated 'posttransfer' editing and involves deacylation of mischarged Val-tRNA(Ile). In Rickettsia akari (strain Hartford), this protein is Isoleucine--tRNA ligase.